A 258-amino-acid polypeptide reads, in one-letter code: Trans-aconitate 2-methyltransferase (258 aa).

The protein belongs to the methyltransferase superfamily. Tam family.

It localises to the cytoplasm. It catalyses the reaction trans-aconitate + S-adenosyl-L-methionine = (E)-3-(methoxycarbonyl)pent-2-enedioate + S-adenosyl-L-homocysteine. Functionally, catalyzes the S-adenosylmethionine monomethyl esterification of trans-aconitate. The protein is Trans-aconitate 2-methyltransferase of Yersinia pestis bv. Antiqua (strain Antiqua).